A 482-amino-acid chain; its full sequence is Glutamate synthase [NADPH] small chain (482 aa).

One can recognise a 4Fe-4S ferredoxin-type domain in the interval 39 to 72; sequence ERANEQANRCSQCGVPFCQVHCPVSNNIPDWLKL. [4Fe-4S] cluster contacts are provided by Cys95, Cys99, Cys105, and Cys109.

Aggregate of 4 catalytic active heterodimers, consisting of a large and a small subunit. The cofactor is [4Fe-4S] cluster.

It carries out the reaction 2 L-glutamate + NADP(+) = L-glutamine + 2-oxoglutarate + NADPH + H(+). It participates in amino-acid biosynthesis; L-glutamate biosynthesis via GLT pathway; L-glutamate from 2-oxoglutarate and L-glutamine (NADP(+) route): step 1/1. The protein operates within energy metabolism; nitrogen metabolism. The protein is Glutamate synthase [NADPH] small chain (gltD) of Azospirillum brasilense.